Reading from the N-terminus, the 95-residue chain is Aspartyl/glutamyl-tRNA(Asn/Gln) amidotransferase subunit C (95 aa).

It belongs to the GatC family. As to quaternary structure, heterotrimer of A, B and C subunits.

The enzyme catalyses L-glutamyl-tRNA(Gln) + L-glutamine + ATP + H2O = L-glutaminyl-tRNA(Gln) + L-glutamate + ADP + phosphate + H(+). The catalysed reaction is L-aspartyl-tRNA(Asn) + L-glutamine + ATP + H2O = L-asparaginyl-tRNA(Asn) + L-glutamate + ADP + phosphate + 2 H(+). In terms of biological role, allows the formation of correctly charged Asn-tRNA(Asn) or Gln-tRNA(Gln) through the transamidation of misacylated Asp-tRNA(Asn) or Glu-tRNA(Gln) in organisms which lack either or both of asparaginyl-tRNA or glutaminyl-tRNA synthetases. The reaction takes place in the presence of glutamine and ATP through an activated phospho-Asp-tRNA(Asn) or phospho-Glu-tRNA(Gln). This is Aspartyl/glutamyl-tRNA(Asn/Gln) amidotransferase subunit C from Rhodopseudomonas palustris (strain BisB18).